The chain runs to 253 residues: Chemokine-binding protein (253 aa).

Positions 1-17 (MKQYIVLACMCLAAAAM) are cleaved as a signal peptide. Residues 62-87 (TEITESESDPEVESEDDSTSVEDVDP) form a disordered region. The span at 65-86 (TESESDPEVESEDDSTSVEDVD) shows a compositional bias: acidic residues.

It belongs to the orthopoxvirus OPG001 family. Binds to host CC chemokines, such as RANTES/CCL5, MIP-1alpha/CCL3, MCP-1/CCL2 and eotaxin.

It localises to the secreted. Inhibits host immune defense by binding to host chemokines. Binds host CC chemokines (beta chemokines) such as RANTES with high affinity, but not CXC or C chemokines (alpha and gamma chemokines). The protein is Chemokine-binding protein (OPG001) of Variola virus (isolate Human/India/Ind3/1967) (VARV).